We begin with the raw amino-acid sequence, 278 residues long: E3 ubiquitin-protein ligase CHIP (278 aa).

TPR repeat units follow at residues 10 to 43 (AERLKEDGNNCFKKERFGAAIDAYTEAIALSPNV), 45 to 77 (AYWTNRALCHMKRKDWTKVEEDCRKAIQLVHNS), and 78 to 111 (VKAHYMLGLALLQKKEFTNGVKELQRALDLGRCS). Positions 143–194 (ELNSLKETCEAALNQQRALDMSRTEESSDEAYTAHTERLKALERVFKKAAEE) form a coiled coil. The U-box domain occupies 199 to 273 (EVPDYLCCNI…AAYLEKHVWA (75 aa)).

As to quaternary structure, interacts with HSC70-4, PP2AA1, PP2AA3 and PP2A5, as well as with UBC8, UBC9 and UBC10. Also interacts with the chloroplastic proteolytic subunits ClpP4, FtsH1 and FtsH2.

The enzyme catalyses S-ubiquitinyl-[E2 ubiquitin-conjugating enzyme]-L-cysteine + [acceptor protein]-L-lysine = [E2 ubiquitin-conjugating enzyme]-L-cysteine + N(6)-ubiquitinyl-[acceptor protein]-L-lysine.. It functions in the pathway protein modification; protein ubiquitination. In terms of biological role, has E3 ubiquitin-protein ligase activity and may target misfolded substrates towards proteasomal degradation. Regulates the activity of some serine/threonine-protein phosphatases by E3 ubiquitin-protein ligase activity. Required for responses to biotic and abiotic stresses such as auxin, abscisic acid (ABA), low and high temperature and darkness, probably through the activation of serine/threonine-protein phosphatase and the subsequent modification of the plasma membrane composition. Regulates the chloroplastic Clp proteolytic activity in response to stresses. Ubiquitylates FtsH1, a component of the chloroplast FtsH protease, and affects protein degradation in chloroplasts. Mediates plastid precursor degradation to prevent cytosolic precursor accumulation, together with the molecular chaperone HSC70-4. Mediates ubiquitination of transit peptides and thereby led to their degradation through the ubiquitin-proteasome system. The protein is E3 ubiquitin-protein ligase CHIP of Arabidopsis thaliana (Mouse-ear cress).